The chain runs to 264 residues: S-adenosylmethionine decarboxylase proenzyme (264 aa).

The active-site Schiff-base intermediate with substrate; via pyruvic acid is Ser112. Position 112 is a pyruvic acid (Ser); by autocatalysis (Ser112). His117 functions as the Proton acceptor; for processing activity in the catalytic mechanism. Cys140 acts as the Proton donor; for catalytic activity in catalysis.

Belongs to the prokaryotic AdoMetDC family. Type 2 subfamily. As to quaternary structure, heterooctamer of four alpha and four beta chains arranged as a tetramer of alpha/beta heterodimers. Pyruvate is required as a cofactor. Post-translationally, is synthesized initially as an inactive proenzyme. Formation of the active enzyme involves a self-maturation process in which the active site pyruvoyl group is generated from an internal serine residue via an autocatalytic post-translational modification. Two non-identical subunits are generated from the proenzyme in this reaction, and the pyruvate is formed at the N-terminus of the alpha chain, which is derived from the carboxyl end of the proenzyme. The post-translation cleavage follows an unusual pathway, termed non-hydrolytic serinolysis, in which the side chain hydroxyl group of the serine supplies its oxygen atom to form the C-terminus of the beta chain, while the remainder of the serine residue undergoes an oxidative deamination to produce ammonia and the pyruvoyl group blocking the N-terminus of the alpha chain.

It catalyses the reaction S-adenosyl-L-methionine + H(+) = S-adenosyl 3-(methylsulfanyl)propylamine + CO2. It functions in the pathway amine and polyamine biosynthesis; S-adenosylmethioninamine biosynthesis; S-adenosylmethioninamine from S-adenosyl-L-methionine: step 1/1. Functionally, catalyzes the decarboxylation of S-adenosylmethionine to S-adenosylmethioninamine (dcAdoMet), the propylamine donor required for the synthesis of the polyamines spermine and spermidine from the diamine putrescine. This is S-adenosylmethionine decarboxylase proenzyme from Pectobacterium atrosepticum (strain SCRI 1043 / ATCC BAA-672) (Erwinia carotovora subsp. atroseptica).